The following is a 238-amino-acid chain: Ribosomal RNA small subunit methyltransferase G (238 aa).

Residues glycine 78, phenylalanine 83, 129–130 (AE), and arginine 148 each bind S-adenosyl-L-methionine. The interval 216–238 (EKKKETPKKYPRKAGTPAKNPIK) is disordered.

It belongs to the methyltransferase superfamily. RNA methyltransferase RsmG family.

It localises to the cytoplasm. Specifically methylates the N7 position of a guanine in 16S rRNA. This chain is Ribosomal RNA small subunit methyltransferase G, found in Lactococcus lactis subsp. lactis (strain IL1403) (Streptococcus lactis).